A 102-amino-acid chain; its full sequence is Protamine-2 (102 aa).

The interval 1 to 102 (MVRYRVRSPS…RTRRRTCRKH (102 aa)) is disordered. Phosphoserine is present on residues Ser8, Ser10, and Ser37. Residues 39–48 (EHVEVYERTH) are compositionally biased toward basic and acidic residues. Positions 49–102 (GHSHYRRRHCSRRRLRRIHRQQHRSCRRRKRRSCRHRRRHRRGCRTRRRTCRKH) are enriched in basic residues.

This sequence belongs to the protamine P2 family. In terms of assembly, interacts with TDRP. In terms of processing, proteolytic processing into mature chains is required for histone eviction during spermatogenesis. Transition proteins (TNP1 and TNP2) are required for processing. As to expression, testis.

The protein resides in the nucleus. It is found in the chromosome. Protamines substitute for histones in the chromatin of sperm during the haploid phase of spermatogenesis. They compact sperm DNA into a highly condensed, stable and inactive complex. The chain is Protamine-2 (PRM2) from Pan paniscus (Pygmy chimpanzee).